Consider the following 127-residue polypeptide: Glycine cleavage system H protein (127 aa).

The Lipoyl-binding domain occupies 24-105; that stretch reads TLTIGITDLA…AYDAWLFKIK (82 aa). Lys-65 is subject to N6-lipoyllysine.

This sequence belongs to the GcvH family. The glycine cleavage system is composed of four proteins: P, T, L and H. It depends on (R)-lipoate as a cofactor.

Functionally, the glycine cleavage system catalyzes the degradation of glycine. The H protein shuttles the methylamine group of glycine from the P protein to the T protein. This is Glycine cleavage system H protein from Ralstonia nicotianae (strain ATCC BAA-1114 / GMI1000) (Ralstonia solanacearum).